We begin with the raw amino-acid sequence, 520 residues long: Laccase (520 aa).

A signal peptide spans 1-21 (MHTFLRSTALVVAGLSARALA). Plastocyanin-like domains lie at 22–148 (SIGP…FVVY) and 160–304 (VDDD…ILRY). Asn-75 is a glycosylation site (N-linked (GlcNAc...) asparagine). Cu cation is bound by residues His-85, His-87, His-130, and His-132. Cystine bridges form between Cys-106–Cys-509 and Cys-138–Cys-227. N-linked (GlcNAc...) asparagine glycosylation is found at Asn-352 and Asn-402. In terms of domain architecture, Plastocyanin-like 3 spans 373–496 (TVPVLLQILS…VFAEDIPDVA (124 aa)). Positions 418, 421, 423, 473, 474, 475, and 479 each coordinate Cu cation.

The protein belongs to the multicopper oxidase family. Cu cation serves as cofactor.

The protein resides in the secreted. It catalyses the reaction 4 hydroquinone + O2 = 4 benzosemiquinone + 2 H2O. Lignin degradation and detoxification of lignin-derived products. The protein is Laccase (LAC) of Phlebia radiata (White-rot fungus).